A 271-amino-acid chain; its full sequence is Putative pyruvate, phosphate dikinase regulatory protein (271 aa).

147-154 (GLSRTSKT) serves as a coordination point for ADP.

This sequence belongs to the pyruvate, phosphate/water dikinase regulatory protein family. PDRP subfamily.

The catalysed reaction is N(tele)-phospho-L-histidyl/L-threonyl-[pyruvate, phosphate dikinase] + ADP = N(tele)-phospho-L-histidyl/O-phospho-L-threonyl-[pyruvate, phosphate dikinase] + AMP + H(+). It carries out the reaction N(tele)-phospho-L-histidyl/O-phospho-L-threonyl-[pyruvate, phosphate dikinase] + phosphate + H(+) = N(tele)-phospho-L-histidyl/L-threonyl-[pyruvate, phosphate dikinase] + diphosphate. Its function is as follows. Bifunctional serine/threonine kinase and phosphorylase involved in the regulation of the pyruvate, phosphate dikinase (PPDK) by catalyzing its phosphorylation/dephosphorylation. The chain is Putative pyruvate, phosphate dikinase regulatory protein from Clostridium tetani (strain Massachusetts / E88).